Reading from the N-terminus, the 457-residue chain is Protein trichome birefringence-like 4 (457 aa).

Residues 19–37 (IFLTSLFFLSLFLLSSSSL) traverse the membrane as a helical; Signal-anchor for type II membrane protein segment. A GDS motif motif is present at residues 173 to 175 (GDS). A DCXHWCLPGXXDXWN motif motif is present at residues 420 to 434 (DCSHWCLPGVPDSWN).

It belongs to the PC-esterase family. TBL subfamily.

It localises to the membrane. In terms of biological role, may act as a bridging protein that binds pectin and other cell wall polysaccharides. Probably involved in maintaining esterification of pectins. May be involved in the specific O-acetylation of cell wall polymers. This chain is Protein trichome birefringence-like 4 (TBL4), found in Arabidopsis thaliana (Mouse-ear cress).